The sequence spans 357 residues: Fluoren-9-ol dehydrogenase (357 aa).

NADP(+) contacts are provided by residues 36–67 (VTGG…TWDD) and D87. Y198 functions as the Proton acceptor in the catalytic mechanism. K202 is an NADP(+) binding site.

The protein belongs to the short-chain dehydrogenases/reductases (SDR) family.

The catalysed reaction is 9H-fluoren-9-ol + NADP(+) = 9H-fluoren-9-one + NADPH + H(+). The enzyme catalyses 9H-fluoren-9-ol + NAD(+) = 9H-fluoren-9-one + NADH + H(+). It functions in the pathway aromatic compound metabolism. Its function is as follows. Catalyzes the dehydrogenation of both 9-fluorenol and 1,1a-dihydroxy-1-hydro-9-fluorenone to produce 9-fluorenone and 2'-carboxy-2,3- dihydroxybiphenyl, respectively. The chain is Fluoren-9-ol dehydrogenase from Terrabacter sp. (strain DBF63).